Here is a 322-residue protein sequence, read N- to C-terminus: Ribose-phosphate pyrophosphokinase 1 (322 aa).

Residues 39-41 (DGE) and 98-99 (RQ) each bind ATP. H132 and D173 together coordinate Mg(2+). The active site involves K196. Residues R198, D224, and 228 to 232 (DTAGT) each bind D-ribose 5-phosphate.

This sequence belongs to the ribose-phosphate pyrophosphokinase family. Class I subfamily. As to quaternary structure, homohexamer. The cofactor is Mg(2+).

It is found in the cytoplasm. It catalyses the reaction D-ribose 5-phosphate + ATP = 5-phospho-alpha-D-ribose 1-diphosphate + AMP + H(+). The protein operates within metabolic intermediate biosynthesis; 5-phospho-alpha-D-ribose 1-diphosphate biosynthesis; 5-phospho-alpha-D-ribose 1-diphosphate from D-ribose 5-phosphate (route I): step 1/1. Functionally, involved in the biosynthesis of the central metabolite phospho-alpha-D-ribosyl-1-pyrophosphate (PRPP) via the transfer of pyrophosphoryl group from ATP to 1-hydroxyl of ribose-5-phosphate (Rib-5-P). The polypeptide is Ribose-phosphate pyrophosphokinase 1 (Streptococcus pneumoniae serotype 4 (strain ATCC BAA-334 / TIGR4)).